Consider the following 276-residue polypeptide: Type II pantothenate kinase (276 aa).

Residue Asp8 to Lys15 coordinates ATP. Glu76 functions as the Proton acceptor in the catalytic mechanism. Residues Thr105, Gly127 to Met131, Phe143, and Ser230 contribute to the ATP site.

It belongs to the type II pantothenate kinase family. As to quaternary structure, homodimer.

The protein localises to the cytoplasm. The enzyme catalyses (R)-pantothenate + ATP = (R)-4'-phosphopantothenate + ADP + H(+). Its pathway is cofactor biosynthesis; coenzyme A biosynthesis; CoA from (R)-pantothenate: step 1/5. Catalyzes the phosphorylation of pantothenate (Pan), the first step in CoA biosynthesis. This chain is Type II pantothenate kinase, found in Bacillus cereus (strain ZK / E33L).